The sequence spans 419 residues: Gamma-glutamyl phosphate reductase (419 aa).

It belongs to the gamma-glutamyl phosphate reductase family.

The protein localises to the cytoplasm. It catalyses the reaction L-glutamate 5-semialdehyde + phosphate + NADP(+) = L-glutamyl 5-phosphate + NADPH + H(+). It participates in amino-acid biosynthesis; L-proline biosynthesis; L-glutamate 5-semialdehyde from L-glutamate: step 2/2. Functionally, catalyzes the NADPH-dependent reduction of L-glutamate 5-phosphate into L-glutamate 5-semialdehyde and phosphate. The product spontaneously undergoes cyclization to form 1-pyrroline-5-carboxylate. This chain is Gamma-glutamyl phosphate reductase, found in Ruthia magnifica subsp. Calyptogena magnifica.